Here is a 151-residue protein sequence, read N- to C-terminus: Transcriptional repressor NrdR (151 aa).

A zinc finger spans residues 3–34; it reads CPYCGYEETRVLDSRVDSSGMTVRRRRECVKC. An ATP-cone domain is found at 49 to 139; the sequence is VFVVKKDGKR…VYKDFREIDQ (91 aa).

It belongs to the NrdR family. The cofactor is Zn(2+).

Its function is as follows. Negatively regulates transcription of bacterial ribonucleotide reductase nrd genes and operons by binding to NrdR-boxes. The protein is Transcriptional repressor NrdR of Thermosipho melanesiensis (strain DSM 12029 / CIP 104789 / BI429).